The chain runs to 330 residues: Mucin-15 (330 aa).

The first 23 residues, 1–23 (MLTSAKILLISILSSLLLFGSHG), serve as a signal peptide directing secretion. Positions 23–115 (GEEGQKTNTT…SPRSPSTHSF (93 aa)) are disordered. Over 24 to 232 (EEGQKTNTTE…SDPQEENRNT (209 aa)) the chain is Extracellular. N-linked (GlcNAc...) asparagine glycosylation is found at Asn-30, Asn-44, Asn-54, Asn-71, Asn-79, Asn-89, Asn-94, Asn-122, Asn-138, Asn-147, Asn-154, Asn-162, Asn-175, Asn-214, and Asn-221. Residues 42 to 56 (MENQSVPLESKANLT) show a composition bias toward polar residues. Residues 86 to 115 (FYSNLSTDNSSRSPSLMPTLSPRSPSTHSF) are compositionally biased toward polar residues. The tract at residues 164-185 (SITVSNLPSGPNTTSVTPMVTE) is disordered. A helical membrane pass occupies residues 233 to 253 (GVVFGAILGAILGASLLSLVG). Topologically, residues 254–330 (YLLCGKRKTD…DDIPPLRTSV (77 aa)) are cytoplasmic. The tract at residues 279–330 (LRLDNAPEPYDMSFGNSSYYNPTANDSSTSAGGENAHDSIPMDDIPPLRTSV) is disordered. Residues 292-310 (FGNSSYYNPTANDSSTSAG) show a composition bias toward polar residues.

Highly glycosylated (N- and O-linked carbohydrates). As to expression, mainly expressed on apical surfaces of the mammary epithelial cells.

It localises to the cell membrane. The protein resides in the secreted. In Bos taurus (Bovine), this protein is Mucin-15 (MUC15).